A 1642-amino-acid chain; its full sequence is MGLPFLCHTRVCLFSNKIPFVLCGSRFAPATLHAHHTAAGGGETLNFPELSSPSTSKEPSVGSDSPQKKNKKQAFDALARWCGGHQQLLMRIQQSAEDTSAGVVFETPLTEVDSAAIRWLQGSTEQLTCGQSLLVCSFVCEVLYCQLNSASGGIGVEEAQRLQIHALTNRIAALLQRADESNKLESQPLSVLMSCAYVVQRLKYVDNPLFGETQRSLVKVPPSIMFALLHKLRGDGLGKLFQLDERTATDVCLSFLFIATEEHRQAFFSSGDAALVSNVLRRLVRYTASKTRRMRIQKEGDIIDLLTVDSPSDGGARQTPVCTSGTGFTSPSMRECAMIMQNVSFSSPSNRLELLLYLLCVRRNLAQCSLKDIELVPTVLSTVANIRSAEACSIRKKIISQLWLPENNPTLVAQLLVHSGESIPRYVTYLQGVPASKLSPRDAAQVILCAGTYLSYESLQLYIMAALRDIMPSSSLVTLGAETTSASVPATASVPTRVPACDSLETVLSVLLMRVEEKGGSLSEVEKDACMEYIRRLNELIDWCASAPTSSPKPALQRLTLLTKLFNRGLVVHAPETVVELAVQSLQLDPGNTMMNTLKCVSEALPLVSDDKKRSIIIEKMISYSGTRTTSSVIRFLLLLAPLVDADSPHSCELVEQLLKFHTLNPHKLRQASVEGVAKGIDVYTLLLINGIDFLLASGDWRSSPSQLQNVITTWVRDYTLYVMDPARKQKIDDGAAAHVAPATKGEKTDVVQHQQPSRLNEGGELPTLSGPNDEELEQVFTCLLRAGVKLPHAFSSELLSRIRRLQAKRNPADGTDQQVVFPLPAHFVFCCKLDVPVEVSVTPEMMKYHIDACDYRIIHCVITAFFSAAGTFKHNINDLLLCNMRLASRSFELFIQRLGEEASRSFRPATVSSVVANTLRFVVNHITKQERCQRVLRKLNEKGGIEAGEEELEGDRSLIAEHTRLGELLTRMIAYLSGAHVKNVGLSVLDRLSLLSPACGEYLMMRLSTQLSEFTQVELLYLVQKYPKSQDLVAELLGKSDLVSSMDFGDYMRVMRNLPMPINALVIGAHLPGLNFQWCTRILSSLSVRHESVPLHLLASVLRRLNDVTESATLTDRNIAFVVLQKYLQFDQTSGDGGDLEERQRLIKCSCDKLLVLSRINSLDTLKEFLVEFPEALSGVICESLSKHVVQHIVGGLLKDLDGLLTLCRLLHRHKLLTSDVKVAIVDGFFMKTLQSEVEGRANIEGESSQGLQPLNSVRGASLKTTHPVSNVLALALLLSDGPLHFPGASNSSSTICGDNERCAVSSMFQVVKESYTSPRDRLLIANTLVGQKGPNALTVVAKEICTELIENCESVTSNDFSRLLQCISRLKCWSELDLANSRFDEVFQRSCTQADAHSRCVAFRAVSFEADIFRRYESFMIPLLQETVDVMSNEDLETVLSSVLSLPFTEALESLIDAIGTRLLRMIDQCRRSALIRLLQCHAAFGIQDDALVSVCVATLTDQCGRDFRLDTAQVLALLQAAVDLDFFLPPKLVTSCFTWLEHHVENMTITQLGHAVRLAVDVEVGYTAAVHTLTLRALEQRDAIRSNASFREAVEMLCDEFSAEIPWHLRAPVLRRRYQSERLLEYLDKRRLAVDSTVA.

The transit peptide at 1–27 directs the protein to the mitochondrion; the sequence is MGLPFLCHTRVCLFSNKIPFVLCGSRF. Disordered stretches follow at residues 43 to 69 and 745 to 772; these read ETLN…PQKK and KGEK…LSGP. Residues 49-65 are compositionally biased toward polar residues; the sequence is ELSSPSTSKEPSVGSDS.

Component of the mitochondrial 3' processome (MPsome) complex composed at least of terminal uridylyltransferase KRET1/TUT1, 3'-5' exonuclease DSS1, MPSS1, MPSS2 and MPSS3. Within the complex, interacts with DSS1.

Its subcellular location is the mitochondrion. In terms of biological role, as part of the mitochondrial 3' processome (MPsome), involved in the maturation of guided RNA (gRNA) precursors. The sequence is that of Mitochondrial 3' processome subunit 2 from Trypanosoma brucei brucei.